A 160-amino-acid chain; its full sequence is Cytochrome b6-f complex subunit 4 (160 aa).

Transmembrane regions (helical) follow at residues 36–56 (ILFT…GLAI), 95–115 (LLGI…PFIE), and 131–151 (AVFL…CFPI).

The protein belongs to the cytochrome b family. PetD subfamily. As to quaternary structure, the 4 large subunits of the cytochrome b6-f complex are cytochrome b6, subunit IV (17 kDa polypeptide, PetD), cytochrome f and the Rieske protein, while the 4 small subunits are PetG, PetL, PetM and PetN. The complex functions as a dimer.

Its subcellular location is the cellular thylakoid membrane. Component of the cytochrome b6-f complex, which mediates electron transfer between photosystem II (PSII) and photosystem I (PSI), cyclic electron flow around PSI, and state transitions. The polypeptide is Cytochrome b6-f complex subunit 4 (Picosynechococcus sp. (strain ATCC 27264 / PCC 7002 / PR-6) (Agmenellum quadruplicatum)).